Consider the following 129-residue polypeptide: Ribulose bisphosphate carboxylase small subunit (129 aa).

Residues 104-120 (ENEPSLRMTRTESDGRS) are compositionally biased toward basic and acidic residues. The disordered stretch occupies residues 104 to 129 (ENEPSLRMTRTESDGRSQHYTWETQR).

Belongs to the RuBisCO small chain family. Heterohexadecamer of 8 large and 8 small subunits.

RuBisCO catalyzes two reactions: the carboxylation of D-ribulose 1,5-bisphosphate, the primary event in carbon dioxide fixation, as well as the oxidative fragmentation of the pentose substrate. Both reactions occur simultaneously and in competition at the same active site. Although the small subunit is not catalytic it is essential for maximal activity. This chain is Ribulose bisphosphate carboxylase small subunit, found in Sinorhizobium medicae (strain WSM419) (Ensifer medicae).